Consider the following 119-residue polypeptide: Ribosome-binding factor A (119 aa).

Belongs to the RbfA family. Monomer. Binds 30S ribosomal subunits, but not 50S ribosomal subunits or 70S ribosomes.

The protein resides in the cytoplasm. In terms of biological role, one of several proteins that assist in the late maturation steps of the functional core of the 30S ribosomal subunit. Associates with free 30S ribosomal subunits (but not with 30S subunits that are part of 70S ribosomes or polysomes). Required for efficient processing of 16S rRNA. May interact with the 5'-terminal helix region of 16S rRNA. This chain is Ribosome-binding factor A, found in Buchnera aphidicola subsp. Baizongia pistaciae (strain Bp).